The chain runs to 489 residues: Rhamnulokinase (489 aa).

Residue 13–17 (ASSGR) participates in ATP binding. The cysteines at positions 68 and 222 are disulfide-linked. Substrate is bound by residues glycine 83 and 236–238 (HDT). The Proton acceptor role is filled by aspartate 237. Threonine 259 contributes to the ATP binding site. A substrate-binding site is contributed by asparagine 296. Glutamine 304 serves as a coordination point for ATP. The cysteines at positions 353 and 370 are disulfide-linked. Glycine 402 contacts ATP. A disulfide bridge connects residues cysteine 413 and cysteine 417.

The protein belongs to the rhamnulokinase family. The cofactor is Mg(2+).

The enzyme catalyses L-rhamnulose + ATP = L-rhamnulose 1-phosphate + ADP + H(+). The protein operates within carbohydrate degradation; L-rhamnose degradation; glycerone phosphate from L-rhamnose: step 2/3. In terms of biological role, involved in the catabolism of L-rhamnose (6-deoxy-L-mannose). Catalyzes the transfer of the gamma-phosphate group from ATP to the 1-hydroxyl group of L-rhamnulose to yield L-rhamnulose 1-phosphate. The sequence is that of Rhamnulokinase from Shigella flexneri serotype 5b (strain 8401).